Consider the following 217-residue polypeptide: Peptidyl-tRNA hydrolase (217 aa).

Tyrosine 14 contacts tRNA. Residue histidine 19 is the Proton acceptor of the active site. Tyrosine 64, asparagine 66, and asparagine 113 together coordinate tRNA. The disordered stretch occupies residues 182 to 217 (MNRINAPPPKPKREQKRSSDAPDSSSDTNTSNASDG). A compositionally biased stretch (low complexity) spans 202-217 (APDSSSDTNTSNASDG).

Belongs to the PTH family. As to quaternary structure, monomer.

It localises to the cytoplasm. It catalyses the reaction an N-acyl-L-alpha-aminoacyl-tRNA + H2O = an N-acyl-L-amino acid + a tRNA + H(+). In terms of biological role, hydrolyzes ribosome-free peptidyl-tRNAs (with 1 or more amino acids incorporated), which drop off the ribosome during protein synthesis, or as a result of ribosome stalling. Catalyzes the release of premature peptidyl moieties from peptidyl-tRNA molecules trapped in stalled 50S ribosomal subunits, and thus maintains levels of free tRNAs and 50S ribosomes. In Roseiflexus sp. (strain RS-1), this protein is Peptidyl-tRNA hydrolase.